Consider the following 193-residue polypeptide: Potassium-transporting ATPase KdpC subunit (193 aa).

The chain crosses the membrane as a helical span at residues 14-34 (ITFTFLVLCGLVYPLIVTGIA).

This sequence belongs to the KdpC family. The system is composed of three essential subunits: KdpA, KdpB and KdpC.

The protein resides in the cell membrane. Part of the high-affinity ATP-driven potassium transport (or Kdp) system, which catalyzes the hydrolysis of ATP coupled with the electrogenic transport of potassium into the cytoplasm. This subunit acts as a catalytic chaperone that increases the ATP-binding affinity of the ATP-hydrolyzing subunit KdpB by the formation of a transient KdpB/KdpC/ATP ternary complex. This is Potassium-transporting ATPase KdpC subunit from Bacillus cereus (strain Q1).